The chain runs to 454 residues: Toxin CfTX-A (454 aa).

An N-terminal signal peptide occupies residues methionine 1–glycine 18. The propeptide occupies asparagine 19–arginine 25. Residues valine 27–glutamate 61 adopt a coiled-coil conformation.

This sequence belongs to the jellyfish toxin family. Type II subfamily. Oligomer. Contains 2 disulfide bonds. Nematocytes.

The protein resides in the secreted. The protein localises to the nematocyst. Its subcellular location is the target cell membrane. In terms of biological role, the fraction containing this toxin and CfTX-A shows potent hemolytic activity. This fraction causes minor effects on the cardiovascular system of anesthetized rats (at 25 ug/kg), since it has no significant effects on heart rate but produces relatively small increases in mean arterial pressure. The sequence is that of Toxin CfTX-A from Chironex fleckeri (Australian box jellyfish).